The chain runs to 261 residues: Phosphatidylglycerol--prolipoprotein diacylglyceryl transferase (261 aa).

Helical transmembrane passes span 19 to 39 (VHWY…LALY), 56 to 76 (LIFY…MLFY), 92 to 112 (WRGG…TWIF), 126 to 146 (FVVP…FING), 173 to 193 (QLYE…WFSA), 199 to 219 (FAVS…AEFF), and 227 to 247 (GFVA…MIII). R139 contacts a 1,2-diacyl-sn-glycero-3-phospho-(1'-sn-glycerol).

This sequence belongs to the Lgt family.

It localises to the cell inner membrane. It carries out the reaction L-cysteinyl-[prolipoprotein] + a 1,2-diacyl-sn-glycero-3-phospho-(1'-sn-glycerol) = an S-1,2-diacyl-sn-glyceryl-L-cysteinyl-[prolipoprotein] + sn-glycerol 1-phosphate + H(+). It functions in the pathway protein modification; lipoprotein biosynthesis (diacylglyceryl transfer). In terms of biological role, catalyzes the transfer of the diacylglyceryl group from phosphatidylglycerol to the sulfhydryl group of the N-terminal cysteine of a prolipoprotein, the first step in the formation of mature lipoproteins. This is Phosphatidylglycerol--prolipoprotein diacylglyceryl transferase from Coxiella burnetii (strain CbuK_Q154) (Coxiella burnetii (strain Q154)).